The primary structure comprises 691 residues: Elongation factor G (691 aa).

Residues 8–282 (EKTRNIGIMA…AVVDYLPSPV (275 aa)) form the tr-type G domain. GTP contacts are provided by residues 17–24 (AHIDAGKT), 81–85 (DTPGH), and 135–138 (NKMD).

This sequence belongs to the TRAFAC class translation factor GTPase superfamily. Classic translation factor GTPase family. EF-G/EF-2 subfamily.

The protein resides in the cytoplasm. Catalyzes the GTP-dependent ribosomal translocation step during translation elongation. During this step, the ribosome changes from the pre-translocational (PRE) to the post-translocational (POST) state as the newly formed A-site-bound peptidyl-tRNA and P-site-bound deacylated tRNA move to the P and E sites, respectively. Catalyzes the coordinated movement of the two tRNA molecules, the mRNA and conformational changes in the ribosome. The sequence is that of Elongation factor G from Caldicellulosiruptor saccharolyticus (strain ATCC 43494 / DSM 8903 / Tp8T 6331).